Here is a 256-residue protein sequence, read N- to C-terminus: 7-cyano-7-deazaguanine synthase (256 aa).

The interval 1–22 (MTDASADALTSPSNSGASQDTS) is disordered. The span at 8 to 22 (ALTSPSNSGASQDTS) shows a compositional bias: polar residues. 30–40 (LSGGLDSVTCL) provides a ligand contact to ATP. Positions 220, 230, 233, and 236 each coordinate Zn(2+).

The protein belongs to the QueC family. Requires Zn(2+) as cofactor.

The enzyme catalyses 7-carboxy-7-deazaguanine + NH4(+) + ATP = 7-cyano-7-deazaguanine + ADP + phosphate + H2O + H(+). Its pathway is purine metabolism; 7-cyano-7-deazaguanine biosynthesis. In terms of biological role, catalyzes the ATP-dependent conversion of 7-carboxy-7-deazaguanine (CDG) to 7-cyano-7-deazaguanine (preQ(0)). In Psychrobacter sp. (strain PRwf-1), this protein is 7-cyano-7-deazaguanine synthase.